A 915-amino-acid polypeptide reads, in one-letter code: Protein inturned (915 aa).

The interval 88-144 (NAKRQANSSNKSEAKLKKLTKILRRKRRPSQRKAEGKDSSQRPASILKNQAGQRPGV) is disordered. Residues 104–118 (KKLTKILRRKRRPSQ) show a composition bias toward basic residues. A compositionally biased stretch (polar residues) spans 128-139 (QRPASILKNQAG). The PDZ domain maps to 165 to 253 (SVSSSSADRG…PMQVRLTLET (89 aa)). The tract at residues 688–738 (GIRGRRASPQRSQSDSGSEGHADGTPASVARRDSLGSGGSDGSLGSAGFLK) is disordered.

The protein belongs to the inturned family.

The protein resides in the cytoplasm. It is found in the cell surface. The protein localises to the cytoskeleton. It localises to the cilium basal body. Functionally, plays a key role in ciliogenesis and embryonic development. Regulator of cilia formation by controlling the organization of the apical actin cytoskeleton and the positioning of the basal bodies at the apical cell surface, which in turn is essential for the normal orientation of elongating ciliary microtubules. Plays a key role in definition of cell polarity via its role in ciliogenesis but not via conversion extension. Has an indirect effect on hedgehog signaling. In Danio rerio (Zebrafish), this protein is Protein inturned (intu).